A 202-amino-acid polypeptide reads, in one-letter code: Superoxide dismutase [Fe] (202 aa).

Histidine 27, histidine 82, aspartate 164, and histidine 168 together coordinate Fe cation.

The protein belongs to the iron/manganese superoxide dismutase family. In terms of assembly, homodimer. Fe cation is required as a cofactor.

The catalysed reaction is 2 superoxide + 2 H(+) = H2O2 + O2. Its function is as follows. Destroys superoxide anion radicals which are normally produced within the cells and which are toxic to biological systems. This chain is Superoxide dismutase [Fe] (sodA), found in Enterococcus faecalis (strain ATCC 700802 / V583).